A 31-amino-acid polypeptide reads, in one-letter code: Cycloviolacin-O14 (31 aa).

The cyclopeptide (Gly-Asn) cross-link spans G1–N31. 3 cysteine pairs are disulfide-bonded: C6–C20, C10–C22, and C15–C28.

This is a cyclic peptide. As to expression, expressed in leaves and petioles but not in petals, roots and runners (at protein level).

In terms of biological role, probably participates in a plant defense mechanism. Has hemolytic activity. This chain is Cycloviolacin-O14, found in Viola odorata (Sweet violet).